Here is a 348-residue protein sequence, read N- to C-terminus: D-alanine--D-alanine ligase (348 aa).

One can recognise an ATP-grasp domain in the interval 132-334 (KRVLESIGIP…YPDLIEELVT (203 aa)). 162-217 (LARLTFPIFVKPANMGSSVGISKAQTKVELRKAIQLALTYDSRVLIEQGVVAREIE) is a binding site for ATP. Mg(2+) contacts are provided by Asp-288, Glu-301, and Asn-303.

Belongs to the D-alanine--D-alanine ligase family. The cofactor is Mg(2+). Mn(2+) is required as a cofactor.

It is found in the cytoplasm. It carries out the reaction 2 D-alanine + ATP = D-alanyl-D-alanine + ADP + phosphate + H(+). The protein operates within cell wall biogenesis; peptidoglycan biosynthesis. Functionally, cell wall formation. This is D-alanine--D-alanine ligase from Streptococcus pyogenes serotype M12 (strain MGAS2096).